A 271-amino-acid chain; its full sequence is Undecaprenyl-diphosphatase (271 aa).

8 helical membrane passes run 2 to 22 (LLILKAIILAIVEGLTEFVPV), 42 to 62 (ANLFNVVIQLGAILAVVVVYW), 80 to 100 (LRFWINIVVACIPAVIFGFSL), 108 to 128 (LFNPITVAIGLVIGGILMIIV), 149 to 168 (SIFVGMFQCLALWPGMSRSA), 175 to 195 (WIAGLSPVVAAEFSFFLAIPV), 214 to 234 (IEFIALIVGFVGAFLVSLVVI), and 248 to 268 (IFAIYRIFIGAILLILAIFKI).

This sequence belongs to the UppP family.

Its subcellular location is the cell membrane. The enzyme catalyses di-trans,octa-cis-undecaprenyl diphosphate + H2O = di-trans,octa-cis-undecaprenyl phosphate + phosphate + H(+). In terms of biological role, catalyzes the dephosphorylation of undecaprenyl diphosphate (UPP). Confers resistance to bacitracin. This Clostridium tetani (strain Massachusetts / E88) protein is Undecaprenyl-diphosphatase.